The sequence spans 57 residues: Thiocillin GE37468 (57 aa).

Positions 1-42 (MGNNEEYFIDVNDLSIDVFDVVEQGGAVTALTADHGMPEVGA) are cleaved as a propeptide — removed in mature form. Residues 43-44 (ST) constitute a cross-link (5-methyloxazole-4-carboxylic acid (Ser-Thr)). A cross-link (pyridine-2,5-dicarboxylic acid (Ser-Cys) (with S-53)) is located at residues 43–52 (STNCFCYICC). The segment at residues 43–53 (STNCFCYICCS) is a cross-link (pyridine-2,5-dicarboxylic acid (Ser-Ser) (with C-52)). The segment at residues 45 to 46 (NC) is a cross-link (thiazole-4-carboxylic acid (Asn-Cys)). The thiazoline-4-carboxylic acid (Phe-Cys) cross-link spans 47–48 (FC). Isoleucine 50 is modified (5-hydroxy-3-methylproline (Ile)). A cross-link (thiazole-4-carboxylic acid (Ile-Cys)) is located at residues 50–51 (IC). The thiazole-4-carboxylic acid (Cys-Cys) cross-link spans 51-52 (CC). A cross-link (thiazole-4-carboxylic acid (Ser-Cys)) is located at residues 53–54 (SC). 2,3-didehydroalanine (Ser) occurs at positions 55 and 56. A propeptide (removed in mature form) is located at residue asparagine 57.

Post-translationally, maturation of thiazole and oxazole containing antibiotics involves the enzymatic condensation of a Cys, Ser or Thr with the alpha-carbonyl of the preceding amino acid to form a thioether or ether bond, then dehydration to form a double bond with the alpha-amino nitrogen. Thiazoline or oxazoline ring are dehydrogenated to form thiazole or oxazole rings. Maturation of pyridinyl containing antibiotics involves the cross-linking of a Ser and a Cys-Ser pair usually separated by 7 or 8 residues along the peptide chain. The Ser residues are dehydrated to didehydroalanines, then bonded between their beta carbons. The alpha carbonyl of the Cys condenses with alpha carbon of the first Ser to form a pyridinyl ring. The ring may be multiply dehydrogenated to form a pyridine ring with loss of the amino nitrogen of the first Ser.

It localises to the secreted. Functionally, has bacteriocidal activity against both aerobic and anaerobic Gram-positive bacteria. Inhibits growth of B.subtilis (MIC=0.047 ug/ml) and methicillin-resistant S.aureus (MRSA) (MIC=0.047 ug/ml). Has poor activity against Gram-negative bacteria, with the exception of B.fragilis. Inhibits bacterial protein biosynthesis by acting on elongation factor Tu (EF-Tu). Full antibiotic activity depends on the presence of the modified residue Ile-50. This is Thiocillin GE37468 (getA) from Streptomyces sp.